Consider the following 497-residue polypeptide: Guanosine-5'-triphosphate,3'-diphosphate pyrophosphatase (497 aa).

Belongs to the GppA/Ppx family. GppA subfamily.

It catalyses the reaction guanosine 3'-diphosphate 5'-triphosphate + H2O = guanosine 3',5'-bis(diphosphate) + phosphate + H(+). Its pathway is purine metabolism; ppGpp biosynthesis; ppGpp from GTP: step 2/2. Functionally, catalyzes the conversion of pppGpp to ppGpp. Guanosine pentaphosphate (pppGpp) is a cytoplasmic signaling molecule which together with ppGpp controls the 'stringent response', an adaptive process that allows bacteria to respond to amino acid starvation, resulting in the coordinated regulation of numerous cellular activities. This is Guanosine-5'-triphosphate,3'-diphosphate pyrophosphatase from Photobacterium profundum (strain SS9).